Consider the following 346-residue polypeptide: UPF0425 pyridoxal phosphate-dependent protein MK0620 (346 aa).

K206 is modified (N6-(pyridoxal phosphate)lysine).

It depends on pyridoxal 5'-phosphate as a cofactor.

This chain is UPF0425 pyridoxal phosphate-dependent protein MK0620, found in Methanopyrus kandleri (strain AV19 / DSM 6324 / JCM 9639 / NBRC 100938).